The sequence spans 365 residues: Caffeic acid 3-O-methyltransferase (365 aa).

Asparagine 133 is a (E)-ferulate binding site. S-adenosyl-L-homocysteine contacts are provided by glycine 210, aspartate 233, aspartate 253, methionine 254, methionine 266, and lysine 267. The active-site Proton acceptor is the histidine 271. Residue aspartate 272 participates in (E)-5-hydroxyferulate binding.

It belongs to the class I-like SAM-binding methyltransferase superfamily. Cation-independent O-methyltransferase family. COMT subfamily. In terms of assembly, homodimer.

It carries out the reaction (E)-caffeate + S-adenosyl-L-methionine = (E)-ferulate + S-adenosyl-L-homocysteine + H(+). The catalysed reaction is (E)-5-hydroxyferulate + S-adenosyl-L-methionine = (E)-sinapate + S-adenosyl-L-homocysteine + H(+). Its pathway is aromatic compound metabolism; phenylpropanoid biosynthesis. With respect to regulation, inhibited by Cu(2+), and to a lesser extent by Ni(2+), Mn(2+), Co(2+), Fe(3+) and Zn(2+). Unaffected by Fe(2+) and Mg(2+). In terms of biological role, catalyzes the conversion of caffeic acid to ferulic acid and of 5-hydroxyferulic acid to sinapic acid. The resulting products may subsequently be converted to the corresponding alcohols that are incorporated into lignins. The polypeptide is Caffeic acid 3-O-methyltransferase (Ammi majus (Bishop's weed)).